A 152-amino-acid polypeptide reads, in one-letter code: Putative multi-protein-binding factor 1 (152 aa).

The disordered stretch occupies residues 1 to 24 (MSDDWESKTVIGSRARVGGGGPRA). The 55-residue stretch at 86–140 (IIKGRSEKGLTQKELAVKINEKPQVVNDYESGRAQPNQQVLSKMERVLGIKLRGK) folds into the HTH cro/C1-type domain. The H-T-H motif DNA-binding region spans 97–116 (QKELAVKINEKPQVVNDYES).

Belongs to the MBF1 family.

Transcriptional coactivator that stimulates GCN4-dependent transcriptional activity by bridging the DNA-binding region of GCN4 and TBP (SPT15), thereby recruiting TBP to GCN4-bound promoters. Involved in induction of the ribosome quality control (RQC) pathway; a pathway that degrades nascent peptide chains during problematic translation. Required to prevent stalled ribosomes from frameshifting. The chain is Putative multi-protein-binding factor 1 (MBF1) from Yarrowia lipolytica (strain CLIB 122 / E 150) (Yeast).